A 227-amino-acid polypeptide reads, in one-letter code: 2-C-methyl-D-erythritol 4-phosphate cytidylyltransferase (227 aa).

It belongs to the IspD/TarI cytidylyltransferase family. IspD subfamily.

It catalyses the reaction 2-C-methyl-D-erythritol 4-phosphate + CTP + H(+) = 4-CDP-2-C-methyl-D-erythritol + diphosphate. It functions in the pathway isoprenoid biosynthesis; isopentenyl diphosphate biosynthesis via DXP pathway; isopentenyl diphosphate from 1-deoxy-D-xylulose 5-phosphate: step 2/6. Functionally, catalyzes the formation of 4-diphosphocytidyl-2-C-methyl-D-erythritol from CTP and 2-C-methyl-D-erythritol 4-phosphate (MEP). The chain is 2-C-methyl-D-erythritol 4-phosphate cytidylyltransferase from Lachnospira eligens (strain ATCC 27750 / DSM 3376 / VPI C15-48 / C15-B4) (Eubacterium eligens).